The primary structure comprises 504 residues: Maturase K (504 aa).

The protein belongs to the intron maturase 2 family. MatK subfamily.

Its subcellular location is the plastid. It localises to the chloroplast. Its function is as follows. Usually encoded in the trnK tRNA gene intron. Probably assists in splicing its own and other chloroplast group II introns. The chain is Maturase K from Bombax buonopozense (Red-flowered silk cotton tree).